The following is a 597-amino-acid chain: Aspartate--tRNA(Asp/Asn) ligase (597 aa).

An L-aspartate-binding site is contributed by Glu176. The segment at Gln200–Lys203 is aspartate. L-aspartate contacts are provided by Arg222 and His451. Residue Arg222–Glu224 participates in ATP binding. Glu489 provides a ligand contact to ATP. Arg496 contacts L-aspartate. Gly541–Arg544 provides a ligand contact to ATP.

This sequence belongs to the class-II aminoacyl-tRNA synthetase family. Type 1 subfamily. Homodimer.

It localises to the cytoplasm. The enzyme catalyses tRNA(Asx) + L-aspartate + ATP = L-aspartyl-tRNA(Asx) + AMP + diphosphate. In terms of biological role, aspartyl-tRNA synthetase with relaxed tRNA specificity since it is able to aspartylate not only its cognate tRNA(Asp) but also tRNA(Asn). Reaction proceeds in two steps: L-aspartate is first activated by ATP to form Asp-AMP and then transferred to the acceptor end of tRNA(Asp/Asn). This Orientia tsutsugamushi (strain Boryong) (Rickettsia tsutsugamushi) protein is Aspartate--tRNA(Asp/Asn) ligase.